We begin with the raw amino-acid sequence, 245 residues long: Probable phosphatase NT01EI_1577 (245 aa).

Positions 7, 9, 15, 40, 73, 101, 131, 192, and 194 each coordinate Zn(2+).

Belongs to the PHP family. Homotrimer. Zn(2+) serves as cofactor.

This chain is Probable phosphatase NT01EI_1577, found in Edwardsiella ictaluri (strain 93-146).